The chain runs to 298 residues: HTH-type transcriptional regulator TsaR (298 aa).

The 58-residue stretch at 1–58 folds into the HTH lysR-type domain; sequence MKLQTLQALICIEEVGSLRAAAQLLHLSQPALSAAIQQLEDELKAPLLVRTKRGVSLT. The segment at residues 18 to 37 is a DNA-binding region (H-T-H motif); that stretch reads LRAAAQLLHLSQPALSAAIQ. 2 residues coordinate toluene-4-sulfonate: S98 and A100.

It belongs to the LysR transcriptional regulatory family. As to quaternary structure, homotetramer. Dimer of dimers related by a twofold axis.

Sensitive to oxygen. Functionally, regulates expression of the tsaMBCD1 operon and of tsaT in response to p-toluenesulfonate (TSA). Acts by binding directly to the promoter region. Binding to the tsa promoter depends on TSA concentration. The sequence is that of HTH-type transcriptional regulator TsaR (tsaR) from Comamonas testosteroni (Pseudomonas testosteroni).